Reading from the N-terminus, the 156-residue chain is SsrA-binding protein (156 aa).

It belongs to the SmpB family.

Its subcellular location is the cytoplasm. Required for rescue of stalled ribosomes mediated by trans-translation. Binds to transfer-messenger RNA (tmRNA), required for stable association of tmRNA with ribosomes. tmRNA and SmpB together mimic tRNA shape, replacing the anticodon stem-loop with SmpB. tmRNA is encoded by the ssrA gene; the 2 termini fold to resemble tRNA(Ala) and it encodes a 'tag peptide', a short internal open reading frame. During trans-translation Ala-aminoacylated tmRNA acts like a tRNA, entering the A-site of stalled ribosomes, displacing the stalled mRNA. The ribosome then switches to translate the ORF on the tmRNA; the nascent peptide is terminated with the 'tag peptide' encoded by the tmRNA and targeted for degradation. The ribosome is freed to recommence translation, which seems to be the essential function of trans-translation. The chain is SsrA-binding protein from Maricaulis maris (strain MCS10) (Caulobacter maris).